The sequence spans 901 residues: Protein translocase subunit SecA (901 aa).

ATP-binding positions include Gln87, 105–109, and Asp512; that span reads GEGKT. The segment at 859 to 901 is disordered; the sequence is HQDDDSAAAAALAAQTGERKVGRNDPCPCGSGKKYKQCHGRLQ. Zn(2+) is bound by residues Cys885, Cys887, Cys896, and His897. Basic residues predominate over residues 891–901; sequence KKYKQCHGRLQ.

Belongs to the SecA family. In terms of assembly, monomer and homodimer. Part of the essential Sec protein translocation apparatus which comprises SecA, SecYEG and auxiliary proteins SecDF-YajC and YidC. Requires Zn(2+) as cofactor.

It is found in the cell inner membrane. The protein resides in the cytoplasm. The catalysed reaction is ATP + H2O + cellular proteinSide 1 = ADP + phosphate + cellular proteinSide 2.. Part of the Sec protein translocase complex. Interacts with the SecYEG preprotein conducting channel. Has a central role in coupling the hydrolysis of ATP to the transfer of proteins into and across the cell membrane, serving both as a receptor for the preprotein-SecB complex and as an ATP-driven molecular motor driving the stepwise translocation of polypeptide chains across the membrane. The chain is Protein translocase subunit SecA from Escherichia coli O157:H7.